The chain runs to 358 residues: Uroporphyrinogen decarboxylase (358 aa).

Substrate contacts are provided by residues 29 to 33 (RQAGR), Asp79, Tyr155, Ser210, and His330.

Belongs to the uroporphyrinogen decarboxylase family. Homodimer.

Its subcellular location is the cytoplasm. It carries out the reaction uroporphyrinogen III + 4 H(+) = coproporphyrinogen III + 4 CO2. Its pathway is porphyrin-containing compound metabolism; protoporphyrin-IX biosynthesis; coproporphyrinogen-III from 5-aminolevulinate: step 4/4. Functionally, catalyzes the decarboxylation of four acetate groups of uroporphyrinogen-III to yield coproporphyrinogen-III. This chain is Uroporphyrinogen decarboxylase, found in Bordetella petrii (strain ATCC BAA-461 / DSM 12804 / CCUG 43448).